Here is a 239-residue protein sequence, read N- to C-terminus: Uridylate kinase (239 aa).

Residue Lys13 to Gly16 participates in ATP binding. Gly55 lines the UMP pocket. Residues Gly56 and Arg60 each coordinate ATP. UMP is bound by residues Asp75 and Thr136–Thr143. 4 residues coordinate ATP: Thr163, Asn164, Tyr169, and Asp172.

Belongs to the UMP kinase family. In terms of assembly, homohexamer.

Its subcellular location is the cytoplasm. It carries out the reaction UMP + ATP = UDP + ADP. Its pathway is pyrimidine metabolism; CTP biosynthesis via de novo pathway; UDP from UMP (UMPK route): step 1/1. Its activity is regulated as follows. Inhibited by UTP. Functionally, catalyzes the reversible phosphorylation of UMP to UDP. This is Uridylate kinase from Neisseria meningitidis serogroup A / serotype 4A (strain DSM 15465 / Z2491).